A 1188-amino-acid polypeptide reads, in one-letter code: DNA-directed RNA polymerase subunit beta (1188 aa).

This sequence belongs to the RNA polymerase beta chain family. As to quaternary structure, the RNAP catalytic core consists of 2 alpha, 1 beta, 1 beta' and 1 omega subunit. When a sigma factor is associated with the core the holoenzyme is formed, which can initiate transcription.

It carries out the reaction RNA(n) + a ribonucleoside 5'-triphosphate = RNA(n+1) + diphosphate. Its function is as follows. DNA-dependent RNA polymerase catalyzes the transcription of DNA into RNA using the four ribonucleoside triphosphates as substrates. The polypeptide is DNA-directed RNA polymerase subunit beta (Streptococcus pyogenes serotype M3 (strain ATCC BAA-595 / MGAS315)).